The chain runs to 227 residues: Ribonuclease 3 (227 aa).

The RNase III domain occupies 4–126 (LDRLERKIGY…IIGAMSLDQG (123 aa)). Glu-39 is a Mg(2+) binding site. Asp-43 is an active-site residue. Residues Asp-112 and Glu-115 each contribute to the Mg(2+) site. Glu-115 is an active-site residue. Residues 153–226 (DAKTRLQEYL…AEQILKELDI (74 aa)) form the DRBM domain.

It belongs to the ribonuclease III family. Homodimer. Mg(2+) serves as cofactor.

It localises to the cytoplasm. It carries out the reaction Endonucleolytic cleavage to 5'-phosphomonoester.. Functionally, digests double-stranded RNA. Involved in the processing of primary rRNA transcript to yield the immediate precursors to the large and small rRNAs (23S and 16S). Processes some mRNAs, and tRNAs when they are encoded in the rRNA operon. Processes pre-crRNA and tracrRNA of type II CRISPR loci if present in the organism. The polypeptide is Ribonuclease 3 (Haemophilus influenzae (strain 86-028NP)).